We begin with the raw amino-acid sequence, 611 residues long: Vitamin B12 transporter BtuB (611 aa).

Residues 1-22 (MQKSALAIALASLLTPISYLHA) form the signal peptide. Positions 29–36 (ETVVVTAN) match the TonB box motif. Residues 41–154 (KASSTLADVE…IGGVINIITK (114 aa)) enclose the TBDR plug domain. In terms of domain architecture, TBDR beta-barrel spans 159–611 (QQGTTVSAGL…AYYLNIGYQF (453 aa)). The TonB C-terminal box motif lies at 594 to 611 (NGYPAAERAYYLNIGYQF).

This sequence belongs to the TonB-dependent receptor family. BtuB (TC 1.B.14.3.1) subfamily.

The protein localises to the cell outer membrane. Involved in the active translocation of vitamin B12 (cyanocobalamin) across the outer membrane to the periplasmic space. It derives its energy for transport by interacting with the trans-periplasmic membrane protein TonB. In Vibrio cholerae serotype O1 (strain ATCC 39541 / Classical Ogawa 395 / O395), this protein is Vitamin B12 transporter BtuB.